The chain runs to 243 residues: Histone H2B.2 (243 aa).

Position 2 is a n,N,N-trimethylalanine; alternate (A2). The residue at position 2 (A2) is a N,N-dimethylalanine; alternate. A2 bears the N-methylalanine; alternate mark. Residues P67 to D145 are disordered. Residues G120 to Q132 show a composition bias toward basic and acidic residues. Positions E133–K142 are enriched in basic residues.

It belongs to the histone H2B family. The nucleosome is a histone octamer containing two molecules each of H2A, H2B, H3 and H4 assembled in one H3-H4 heterotetramer and two H2A-H2B heterodimers. The octamer wraps approximately 147 bp of DNA. Post-translationally, can be acetylated to form H2BK6ac.

It localises to the nucleus. It is found in the chromosome. Functionally, core component of nucleosome. Nucleosomes wrap and compact DNA into chromatin, limiting DNA accessibility to the cellular machineries which require DNA as a template. Histones thereby play a central role in transcription regulation, DNA repair, DNA replication and chromosomal stability. DNA accessibility is regulated via a complex set of post-translational modifications of histones, also called histone code, and nucleosome remodeling. In Arabidopsis thaliana (Mouse-ear cress), this protein is Histone H2B.2.